A 284-amino-acid polypeptide reads, in one-letter code: D-tagatose-1,6-bisphosphate aldolase subunit GatY (284 aa).

Asp82 (proton donor) is an active-site residue. Zn(2+) contacts are provided by His83 and His180. Residue Gly181 participates in dihydroxyacetone phosphate binding. Zn(2+) is bound at residue His208. Dihydroxyacetone phosphate is bound by residues 209-211 (GAS) and 230-233 (NVAT).

It belongs to the class II fructose-bisphosphate aldolase family. TagBP aldolase GatY subfamily. As to quaternary structure, forms a complex with GatZ. Zn(2+) serves as cofactor.

The enzyme catalyses D-tagatofuranose 1,6-bisphosphate = D-glyceraldehyde 3-phosphate + dihydroxyacetone phosphate. It participates in carbohydrate metabolism; D-tagatose 6-phosphate degradation; D-glyceraldehyde 3-phosphate and glycerone phosphate from D-tagatose 6-phosphate: step 2/2. Functionally, catalytic subunit of the tagatose-1,6-bisphosphate aldolase GatYZ, which catalyzes the reversible aldol condensation of dihydroxyacetone phosphate (DHAP or glycerone-phosphate) with glyceraldehyde 3-phosphate (G3P) to produce tagatose 1,6-bisphosphate (TBP). Requires GatZ subunit for full activity and stability. Is involved in the catabolism of galactitol. This chain is D-tagatose-1,6-bisphosphate aldolase subunit GatY, found in Escherichia coli (strain SMS-3-5 / SECEC).